We begin with the raw amino-acid sequence, 152 residues long: MAANSKTAIRLSLRAGERIFINGAVLRADRKVSLELLNDATFLLENHVLQPEDTTTPLRQLYFAAQMMLIEPAMREQAGATFAQMLKGMFATFKDAEILNALKLVDELVHNGRVFEALKTIRAQYPREAELMGAQPVVWPVTKSGKSAGANP.

Belongs to the FlbT family.

Has a post-transcriptional repressor function in flagellum biogenesis. Associates with the 5'-UTR of fljK mRNA and promotes its degradation. The chain is Probable flagellum biosynthesis repressor protein FlbT from Brucella canis (strain ATCC 23365 / NCTC 10854 / RM-666).